A 203-amino-acid polypeptide reads, in one-letter code: Outer-membrane lipoprotein LolB (203 aa).

Positions 1–18 are cleaved as a signal peptide; that stretch reads MYRLLCLLALLTAAGLMG. A lipid anchor (N-palmitoyl cysteine) is attached at Cys19. Residue Cys19 is the site of S-diacylglycerol cysteine attachment.

Belongs to the LolB family. In terms of assembly, monomer.

Its subcellular location is the cell outer membrane. Its function is as follows. Plays a critical role in the incorporation of lipoproteins in the outer membrane after they are released by the LolA protein. The protein is Outer-membrane lipoprotein LolB of Cellvibrio japonicus (strain Ueda107) (Pseudomonas fluorescens subsp. cellulosa).